We begin with the raw amino-acid sequence, 363 residues long: Phospho-N-acetylmuramoyl-pentapeptide-transferase (363 aa).

11 consecutive transmembrane segments (helical) span residues 4-24 (NLLV…NVIV), 28-48 (IAIL…IKYF), 72-92 (TPTM…LMLA), 96-116 (NIYV…GLID), 129-149 (INAT…CMIV), 169-189 (LTID…IGSS), 200-220 (GLVT…CYLA), 241-261 (ELTV…WYNI), 266-286 (IFMG…ISVI), 294-314 (GIIG…IYSI), and 342-362 (IVSR…SSLI).

The protein belongs to the glycosyltransferase 4 family. MraY subfamily. Mg(2+) is required as a cofactor.

It localises to the cell inner membrane. The catalysed reaction is UDP-N-acetyl-alpha-D-muramoyl-L-alanyl-gamma-D-glutamyl-meso-2,6-diaminopimeloyl-D-alanyl-D-alanine + di-trans,octa-cis-undecaprenyl phosphate = di-trans,octa-cis-undecaprenyl diphospho-N-acetyl-alpha-D-muramoyl-L-alanyl-D-glutamyl-meso-2,6-diaminopimeloyl-D-alanyl-D-alanine + UMP. It participates in cell wall biogenesis; peptidoglycan biosynthesis. Catalyzes the initial step of the lipid cycle reactions in the biosynthesis of the cell wall peptidoglycan: transfers peptidoglycan precursor phospho-MurNAc-pentapeptide from UDP-MurNAc-pentapeptide onto the lipid carrier undecaprenyl phosphate, yielding undecaprenyl-pyrophosphoryl-MurNAc-pentapeptide, known as lipid I. The protein is Phospho-N-acetylmuramoyl-pentapeptide-transferase of Orientia tsutsugamushi (strain Ikeda) (Rickettsia tsutsugamushi).